A 628-amino-acid chain; its full sequence is Probable alpha-L-arabinofuranosidase A (628 aa).

Positions Met1–Gly25 are cleaved as a signal peptide. N-linked (GlcNAc...) asparagine glycosylation is found at Asn36, Asn51, Asn74, Asn152, Asn171, Asn260, Asn359, Asn440, Asn493, and Asn610.

It belongs to the glycosyl hydrolase 51 family.

Its subcellular location is the secreted. It carries out the reaction Hydrolysis of terminal non-reducing alpha-L-arabinofuranoside residues in alpha-L-arabinosides.. It participates in glycan metabolism; L-arabinan degradation. Its function is as follows. Alpha-L-arabinofuranosidase involved in the degradation of arabinoxylan, a major component of plant hemicellulose. Acts only on small linear 1,5-alpha-linked L-arabinofuranosyl oligosaccharides. The polypeptide is Probable alpha-L-arabinofuranosidase A (abfA) (Aspergillus niger (strain ATCC MYA-4892 / CBS 513.88 / FGSC A1513)).